The sequence spans 462 residues: A-type ATP synthase subunit B (462 aa).

Belongs to the ATPase alpha/beta chains family. In terms of assembly, has multiple subunits with at least A(3), B(3), C, D, E, F, H, I and proteolipid K(x).

It is found in the cell membrane. In terms of biological role, component of the A-type ATP synthase that produces ATP from ADP in the presence of a proton gradient across the membrane. The B chain is a regulatory subunit. This is A-type ATP synthase subunit B from Pyrococcus furiosus (strain ATCC 43587 / DSM 3638 / JCM 8422 / Vc1).